We begin with the raw amino-acid sequence, 113 residues long: Putative single-stranded DNA-binding protein ycf41 (113 aa).

The 101-residue stretch at 1–101 folds into the SSB domain; it reads MNYASFIIKI…EVSGFKIYPF (101 aa).

It localises to the plastid. Its subcellular location is the chloroplast. The polypeptide is Putative single-stranded DNA-binding protein ycf41 (ycf41) (Trieres chinensis (Marine centric diatom)).